The following is an 831-amino-acid chain: V-type proton ATPase subunit a (831 aa).

The Cytoplasmic segment spans residues 1-418 (MSPSLFRSEE…DSYGIATYRE (418 aa)). The helical transmembrane segment at 419-437 (VNHGIVAIVTFPFLFAIMF) threads the bilayer. Over 438 to 439 (GD) the chain is Vacuolar. The chain crosses the membrane as a helical span at residues 440–456 (LGHGAIMASVALMFVLY). Over 457 to 471 (EKTLGAKKDLDEIVG) the chain is Cytoplasmic. A helical membrane pass occupies residues 472–501 (MVFYGRYIVLLMGLFSMYVGFVYNDLFSKP). The Vacuolar segment spans residues 502–548 (MSIFSSRWVWPVKSEEAIARAVQVGTYPIGIDPTWHSADNNLLFMNS). The chain crosses the membrane as a helical span at residues 549-568 (YKMKLSIILGVIHMTFCLFL). At 569–586 (SLSNYRFFKRKLDIYAVF) the chain is on the cytoplasmic side. The helical transmembrane segment at 587 to 607 (VPSLIFLEAIFGYLVITIVYK) threads the bilayer. At 608–650 (WCIDWKAKDLQPPSLLNMLILMFLSPGTLEDQLYPGQKYLQVG) the chain is on the vacuolar side. A helical membrane pass occupies residues 651–670 (LVIAALICVPWLLIVKPFVL). The Cytoplasmic portion of the chain corresponds to 671-723 (WRRHSNEENKYQSLNSDLPNVDEADALMAVDSQEKQAEPFELGEVVIHQVIHT). Residues 724–748 (IEFCLGCVSHTASYLRLWALSLAHN) form a helical membrane-spanning segment. At 749–769 (QLSSVLWNMTLANGFRMTGIV) the chain is on the vacuolar side. The helical transmembrane segment at 770–808 (GSIFVVILFGFWFIATCVVLVAMEGTSAMLHSLRLHWVE) threads the bilayer. The Cytoplasmic portion of the chain corresponds to 809 to 831 (GMSKHFEGEGYAFTPFTFKVTAE).

The protein belongs to the V-ATPase 116 kDa subunit family. V-ATPase is a heteromultimeric enzyme composed of a peripheral catalytic V1 complex (components A to H) attached to an integral membrane V0 proton pore complex (components: a, c, c', c'', d, e, f and VOA1).

It is found in the vacuole membrane. Subunit of the V0 complex of vacuolar(H+)-ATPase (V-ATPase), a multisubunit enzyme composed of a peripheral complex (V1) that hydrolyzes ATP and a membrane integral complex (V0) that translocates protons. V-ATPase is responsible for acidifying and maintaining the pH of intracellular compartments. This Schizosaccharomyces pombe (strain 972 / ATCC 24843) (Fission yeast) protein is V-type proton ATPase subunit a (vph1).